Here is a 200-residue protein sequence, read N- to C-terminus: Glutathione S-transferase 1-1 (200 aa).

Residues 1–73 (GSSPCRSVIM…YLVEKYGKTD (73 aa)) enclose the GST N-terminal domain. Residues S2, 43–45 (HTI), and 57–59 (ESR) contribute to the glutathione site. The region spanning 79-200 (CPKKRAVINQ…AGCLEFKKYF (122 aa)) is the GST C-terminal domain.

This sequence belongs to the GST superfamily. Theta family. Homodimer.

The catalysed reaction is RX + glutathione = an S-substituted glutathione + a halide anion + H(+). It catalyses the reaction 1,1,1-trichloro-2,2-bis(4-chlorophenyl)ethane = 1,1-dichloro-2,2-bis(4-chlorophenyl)ethylene + chloride + H(+). Its function is as follows. Conjugation of reduced glutathione to a wide number of exogenous and endogenous hydrophobic electrophiles. Has DDT dehydrochlorinase activity. The sequence is that of Glutathione S-transferase 1-1 (GstD1) from Drosophila teissieri (Fruit fly).